The chain runs to 123 residues: MPTINQLIRKKRQSGATRKKSPALQKSPQKRGVCLQVKTKTPKKPNSALRKVAWVRLSNGQEVIAYIGGEGHNLQEHSIVLVQGGRVKDLPGVRYHIVRGALDCAAVKNRKQSRSRYGAKRPK.

The tract at residues 1-45 (MPTINQLIRKKRQSGATRKKSPALQKSPQKRGVCLQVKTKTPKKP) is disordered. Over residues 8–21 (IRKKRQSGATRKKS) the composition is skewed to basic residues.

The protein belongs to the universal ribosomal protein uS12 family. Part of the 30S ribosomal subunit. Contacts proteins S8 and S17. May interact with IF1 in the 30S initiation complex.

Its function is as follows. With S4 and S5 plays an important role in translational accuracy. Functionally, interacts with and stabilizes bases of the 16S rRNA that are involved in tRNA selection in the A site and with the mRNA backbone. Located at the interface of the 30S and 50S subunits, it traverses the body of the 30S subunit contacting proteins on the other side and probably holding the rRNA structure together. The combined cluster of proteins S8, S12 and S17 appears to hold together the shoulder and platform of the 30S subunit. This chain is Small ribosomal subunit protein uS12, found in Chlamydia muridarum (strain MoPn / Nigg).